Here is a 584-residue protein sequence, read N- to C-terminus: Aspartate--tRNA(Asp/Asn) ligase (584 aa).

L-aspartate is bound at residue glutamate 177. The aspartate stretch occupies residues 201–204; that stretch reads QLFK. An L-aspartate-binding site is contributed by arginine 223. ATP-binding positions include 223-225 and glutamine 232; that span reads RDE. Residue histidine 447 participates in L-aspartate binding. Glutamate 481 contributes to the ATP binding site. Arginine 488 lines the L-aspartate pocket. Residue 533–536 coordinates ATP; the sequence is GLDR.

Belongs to the class-II aminoacyl-tRNA synthetase family. Type 1 subfamily. Homodimer.

The protein localises to the cytoplasm. The catalysed reaction is tRNA(Asx) + L-aspartate + ATP = L-aspartyl-tRNA(Asx) + AMP + diphosphate. In terms of biological role, aspartyl-tRNA synthetase with relaxed tRNA specificity since it is able to aspartylate not only its cognate tRNA(Asp) but also tRNA(Asn). Reaction proceeds in two steps: L-aspartate is first activated by ATP to form Asp-AMP and then transferred to the acceptor end of tRNA(Asp/Asn). The chain is Aspartate--tRNA(Asp/Asn) ligase from Chlamydia pneumoniae (Chlamydophila pneumoniae).